The following is a 501-amino-acid chain: Glucans biosynthesis protein G (501 aa).

A signal peptide spans 1–25 (MNRRQVLTGLAALPLLQAKPDPAAA).

The protein belongs to the OpgD/OpgG family.

It localises to the periplasm. The protein operates within glycan metabolism; osmoregulated periplasmic glucan (OPG) biosynthesis. Its function is as follows. Involved in the biosynthesis of osmoregulated periplasmic glucans (OPGs). This Rhodopseudomonas palustris (strain ATCC BAA-98 / CGA009) protein is Glucans biosynthesis protein G.